The primary structure comprises 37 residues: Large ribosomal subunit protein bL36 (37 aa).

This sequence belongs to the bacterial ribosomal protein bL36 family.

The polypeptide is Large ribosomal subunit protein bL36 (Chromohalobacter salexigens (strain ATCC BAA-138 / DSM 3043 / CIP 106854 / NCIMB 13768 / 1H11)).